The primary structure comprises 260 residues: tRNA (guanine-N(7)-)-methyltransferase (260 aa).

Residues 1-37 form a disordered region; that stretch reads MIHDPNDAGLPDQLPTPSSEAENSPAGDTTPPEEALH. S-adenosyl-L-methionine-binding residues include Glu-90, Glu-115, Asp-142, and Asp-165. Asp-165 is an active-site residue. Substrate contacts are provided by residues Lys-169, Asp-201, and 236–239; that span reads TKFE.

Belongs to the class I-like SAM-binding methyltransferase superfamily. TrmB family.

It catalyses the reaction guanosine(46) in tRNA + S-adenosyl-L-methionine = N(7)-methylguanosine(46) in tRNA + S-adenosyl-L-homocysteine. The protein operates within tRNA modification; N(7)-methylguanine-tRNA biosynthesis. In terms of biological role, catalyzes the formation of N(7)-methylguanine at position 46 (m7G46) in tRNA. In Paraburkholderia xenovorans (strain LB400), this protein is tRNA (guanine-N(7)-)-methyltransferase.